The chain runs to 275 residues: Anamorsin homolog (275 aa).

Residues M1 to G147 form an N-terminal SAM-like domain region. A linker region spans residues R148–M183. [2Fe-2S] cluster contacts are provided by C203, C209, C212, and C214. Residues C203 to C214 form a fe-S binding site A region. The [4Fe-4S] cluster site is built by C238, C241, C249, and C252. Short sequence motifs (cx2C motif) lie at residues C238–C241 and C249–C252. The interval C238–C252 is fe-S binding site B.

Belongs to the anamorsin family. In terms of assembly, monomer. Requires [2Fe-2S] cluster as cofactor. [4Fe-4S] cluster serves as cofactor.

The protein resides in the cytoplasm. Its subcellular location is the mitochondrion intermembrane space. In terms of biological role, component of the cytosolic iron-sulfur (Fe-S) protein assembly (CIA) machinery. Required for the maturation of extramitochondrial Fe-S proteins. Part of an electron transfer chain functioning in an early step of cytosolic Fe-S biogenesis, facilitating the de novo assembly of a [4Fe-4S] cluster on the cytosolic Fe-S scaffold complex. Electrons are transferred from NADPH via a FAD- and FMN-containing diflavin oxidoreductase. Together with the diflavin oxidoreductase, also required for the assembly of the diferric tyrosyl radical cofactor of ribonucleotide reductase (RNR), probably by providing electrons for reduction during radical cofactor maturation in the catalytic small subunit. The chain is Anamorsin homolog from Thalassiosira pseudonana (Marine diatom).